The primary structure comprises 325 residues: Probable conjugal transfer protein TrbB (325 aa).

Residue 151–158 (GGTASGKT) participates in ATP binding.

This sequence belongs to the GSP E family.

It is found in the cytoplasm. In Sinorhizobium fredii (strain NBRC 101917 / NGR234), this protein is Probable conjugal transfer protein TrbB (trbB).